The primary structure comprises 142 residues: Hemoglobin subunit alpha (142 aa).

The region spanning 2–142 (HLTADDKKHI…VSNVLTSKYR (141 aa)) is the Globin domain. Heme b contacts are provided by His-59 and His-88.

The protein belongs to the globin family. In terms of assembly, heterotetramer of two alpha chains and two beta chains. As to expression, red blood cells.

Functionally, involved in oxygen transport from the lung to the various peripheral tissues. The protein is Hemoglobin subunit alpha (hba-A) of Xenopus tropicalis (Western clawed frog).